Reading from the N-terminus, the 432-residue chain is Neuronal pentraxin-1 (432 aa).

An N-terminal signal peptide occupies residues 1 to 22 (MLAGRAARTCALLALCLLGSGA). The segment at 88 to 122 (RCESQSTLDSGPGEARSGGGRKQPGSGKNTMGDLS) is disordered. Residues N154 and N193 are each glycosylated (N-linked (GlcNAc...) asparagine). Residues 226–428 (DKFQLTFPLR…GATKWTFEAC (203 aa)) enclose the Pentraxin (PTX) domain. C256 and C316 form a disulfide bridge. Ca(2+) contacts are provided by N280, E358, Q359, D360, and Q370.

Homooligomer or heterooligomer (probably pentamer) with neuronal pentraxin receptor (NPTXR). Ca(2+) is required as a cofactor. As to expression, expressed in brain and kidney.

Its subcellular location is the secreted. It localises to the cytoplasmic vesicle. The protein resides in the secretory vesicle. It is found in the endoplasmic reticulum. Functionally, may be involved in mediating uptake of synaptic material during synapse remodeling or in mediating the synaptic clustering of AMPA glutamate receptors at a subset of excitatory synapses. This Mus musculus (Mouse) protein is Neuronal pentraxin-1 (Nptx1).